Here is a 747-residue protein sequence, read N- to C-terminus: DNA ligase (747 aa).

NAD(+) is bound by residues 33 to 37 (DEEYD), 83 to 84 (SL), and Glu-113. Lys-115 acts as the N6-AMP-lysine intermediate in catalysis. NAD(+) is bound by residues Arg-136, Glu-174, Lys-299, and Lys-323. The Zn(2+) site is built by Cys-417, Cys-420, Cys-436, and Cys-442. The region spanning 659–747 (TGGGVLSGLT…GPGALPEVAE (89 aa)) is the BRCT domain.

It belongs to the NAD-dependent DNA ligase family. LigA subfamily. Mg(2+) serves as cofactor. The cofactor is Mn(2+).

It catalyses the reaction NAD(+) + (deoxyribonucleotide)n-3'-hydroxyl + 5'-phospho-(deoxyribonucleotide)m = (deoxyribonucleotide)n+m + AMP + beta-nicotinamide D-nucleotide.. Its function is as follows. DNA ligase that catalyzes the formation of phosphodiester linkages between 5'-phosphoryl and 3'-hydroxyl groups in double-stranded DNA using NAD as a coenzyme and as the energy source for the reaction. It is essential for DNA replication and repair of damaged DNA. This is DNA ligase from Leifsonia xyli subsp. xyli (strain CTCB07).